The sequence spans 327 residues: Trypsin-like protease try-5 (327 aa).

The signal sequence occupies residues 1–21; the sequence is MRPRIIVFLFQVLVVIKGTKL. Residues 43-327 form the Peptidase S1 domain; the sequence is AAGNTGNPTH…KFIVNFINQA (285 aa). The cysteines at positions 73 and 89 are disulfide-linked. Catalysis depends on charge relay system residues histidine 88 and aspartate 173. N-linked (GlcNAc...) asparagine glycosylation occurs at asparagine 207. Cystine bridges form between cysteine 242-cysteine 256 and cysteine 266-cysteine 296. The Charge relay system role is filled by serine 270.

It belongs to the peptidase S1 family. As to expression, specifically expressed in the male gonad including the seminal vesicle, the valve region and the vas deferens.

The protein localises to the secreted. Its subcellular location is the cytoplasmic vesicle. It localises to the secretory vesicle lumen. In the male gonad, probably maintained inactive by swm-1. Its function is as follows. Serine protease which, in males, acts as a promoting signal during mating to activate sperm. The sequence is that of Trypsin-like protease try-5 from Caenorhabditis elegans.